A 333-amino-acid polypeptide reads, in one-letter code: Serine/threonine-protein phosphatase PP1-beta (333 aa).

Mn(2+)-binding residues include D63, H65, D91, and N123. H124 serves as the catalytic Proton donor. Residues H172 and H247 each coordinate Mn(2+). The disordered stretch occupies residues 306–333 (GAGGVGSNRPVTPPRNAPAAQPKKGAKK). A compositionally biased stretch (low complexity) spans 322–333 (APAAQPKKGAKK).

It belongs to the PPP phosphatase family. PP-1 subfamily. As to quaternary structure, interacts with lab-1; the interaction is direct. Interacts with knl-1; the interaction is direct. Mn(2+) is required as a cofactor. Expressed in gonads, nervous system, intestine and muscles.

The protein resides in the cytoplasm. The protein localises to the nucleus. It carries out the reaction O-phospho-L-seryl-[protein] + H2O = L-seryl-[protein] + phosphate. The enzyme catalyses O-phospho-L-threonyl-[protein] + H2O = L-threonyl-[protein] + phosphate. Its activity is regulated as follows. Inhibited by okadaic acid. Its function is as follows. Serine/threonine-protein phosphatase essential for chromosomal dynamics during meiosis and mitosis. During meiosis, promotes chromosomal cohesion and germline immortality via a small RNA-mediated genome silencing pathway. Antagonizes the function of air-2 kinase during meiosis I and mitosis to promote chromatid cohesion and spindle attachment. Dephosphorylates histone H3 at 'Ser-10'. Dephosphorylates histone H3 at 'Thr-3'. Also involved in the activation of chloride channel clh-3 during cell swelling and meiotic maturation. Promotes small RNA-mediated genome silencing over multiple generations. Essential for embryogenesis. The chain is Serine/threonine-protein phosphatase PP1-beta from Caenorhabditis elegans.